A 137-amino-acid polypeptide reads, in one-letter code: Drosulfakinins (137 aa).

Residues 1 to 31 form the signal peptide; sequence MGLRSCTHFATLVIPLWALAFCFLVVVPVPA. The propeptide occupies 32 to 74; sequence QTNLQTSKGDRRLQDLESNMGAESDQPNANLVRPSLSRFGDKR. Phe81 is subject to Phenylalanine amide. Residues 85-107 constitute a propeptide that is removed on maturation; it reads VPRPMIPIELDLLMDNDDENTKA. Residue Tyr113 is modified to Sulfotyrosine. Phe118 carries the post-translational modification Phenylalanine amide. Tyr130 carries the post-translational modification Sulfotyrosine. At Phe135 the chain carries Phenylalanine amide.

This sequence belongs to the gastrin/cholecystokinin family.

The protein localises to the secreted. Functionally, drosulfakinin-0 (DSK 0) plays diverse biological roles including regulating gut muscle contraction in adults but not in larvae. The sequence is that of Drosulfakinins from Drosophila yakuba (Fruit fly).